Reading from the N-terminus, the 196-residue chain is uncharacterized protein (196 aa).

Residues 7-67 (RNTKEKILTA…AVIDNHVKIW (61 aa)) enclose the HTH tetR-type domain. The segment at residues 30–49 (SINDILDETATGKGQFYYYF) is a DNA-binding region (H-T-H motif).

This is an uncharacterized protein from Lactococcus lactis subsp. lactis (Streptococcus lactis).